The sequence spans 330 residues: Polyprenol dehydrogenase (330 aa).

NAD(+) is bound by residues isoleucine 55, tyrosine 208, lysine 212, and threonine 245. Tyrosine 208 functions as the Proton acceptor in the catalytic mechanism.

Belongs to the short-chain dehydrogenases/reductases (SDR) family. In terms of tissue distribution, widely expressed. Highly expressed in the pancreas.

Its subcellular location is the lipid droplet. It localises to the secreted. The catalysed reaction is a di-trans,poly-cis-polyprenol + NAD(+) = a di-trans,poly-cis-polyprenal + NADH + H(+). It carries out the reaction a di-trans,poly-cis-polyprenol + NADP(+) = a di-trans,poly-cis-polyprenal + NADPH + H(+). The enzyme catalyses a di-trans,poly-cis-dolichol + NADP(+) = a di-trans,poly-cis-dolichal + NADPH + H(+). It catalyses the reaction a di-trans,poly-cis-dolichol + NAD(+) = a di-trans,poly-cis-dolichal + NADH + H(+). The protein operates within protein modification; protein glycosylation. Its function is as follows. Oxidoreductase that plays a key role in early steps of protein N-linked glycosylation by mediating two non-consecutive steps in dolichol biosynthesis. Acts both as a NAD(+)-dependent dehydrogenase and as a NADPH-dependent reductase during the conversion of polyprenol into dolichol. First catalyzes the NAD(+)-dependent dehydrogenation of polyprenol into polyprenal; polyprenal is then reduced into dolichal by SRD5A3. It then catalyzes the NADPH-dependent reduction of dolichal into dolichol. May also acts as a positive regulator of starvation-induced autophagy. The chain is Polyprenol dehydrogenase from Homo sapiens (Human).